The following is a 133-amino-acid chain: Small ribosomal subunit protein uS11 (133 aa).

It belongs to the universal ribosomal protein uS11 family. As to quaternary structure, part of the 30S ribosomal subunit. Interacts with proteins S7 and S18. Binds to IF-3.

Functionally, located on the platform of the 30S subunit, it bridges several disparate RNA helices of the 16S rRNA. Forms part of the Shine-Dalgarno cleft in the 70S ribosome. This chain is Small ribosomal subunit protein uS11, found in Chlamydia pneumoniae (Chlamydophila pneumoniae).